The primary structure comprises 409 residues: 4-hydroxy-3-methylbut-2-en-1-yl diphosphate synthase (flavodoxin) (409 aa).

Residues C298, C301, C344, and E351 each contribute to the [4Fe-4S] cluster site.

The protein belongs to the IspG family. Requires [4Fe-4S] cluster as cofactor.

It carries out the reaction (2E)-4-hydroxy-3-methylbut-2-enyl diphosphate + oxidized [flavodoxin] + H2O + 2 H(+) = 2-C-methyl-D-erythritol 2,4-cyclic diphosphate + reduced [flavodoxin]. It functions in the pathway isoprenoid biosynthesis; isopentenyl diphosphate biosynthesis via DXP pathway; isopentenyl diphosphate from 1-deoxy-D-xylulose 5-phosphate: step 5/6. Its function is as follows. Converts 2C-methyl-D-erythritol 2,4-cyclodiphosphate (ME-2,4cPP) into 1-hydroxy-2-methyl-2-(E)-butenyl 4-diphosphate. This chain is 4-hydroxy-3-methylbut-2-en-1-yl diphosphate synthase (flavodoxin), found in Dechloromonas aromatica (strain RCB).